Reading from the N-terminus, the 840-residue chain is Probable sulfate permease C869.05c (840 aa).

Helical transmembrane passes span 120–140 (WLINDLIAGITVGCVVVPQGM), 148–168 (LPSEYGLYSSFVGVAIYCFFA), 173–193 (VSIGPVAVMSLITAKVIANVM), 208–228 (LALLAGAITCGIGLLRLGFII), 230–250 (FIPVPAVAGFTTGSALNILSG), 278–298 (LPDTTVDAAFGLVSLFILFFT), 315–335 (AFFLTNTLRSAVVVIVGTAIS), 410–430 (LIAMGVTNLIGIFFNAYPATG), 447–467 (IAGIFTAAVVILSLYCLTDAF), 470–490 (IPNAILSAVIIHAVTDLILPM), 505–525 (CIFFISVIVSVFSSIENGIYV), and 527–547 (VCLAAALLLLRIAKPHGSFLG). In terms of domain architecture, STAS spans 578–733 (NLEIQSPPPG…CVEVAAPLRD (156 aa)). S823 bears the Phosphoserine mark.

This sequence belongs to the SLC26A/SulP transporter (TC 2.A.53) family.

It localises to the membrane. In terms of biological role, high affinity uptake of sulfate into the cell. The polypeptide is Probable sulfate permease C869.05c (Schizosaccharomyces pombe (strain 972 / ATCC 24843) (Fission yeast)).